Here is a 672-residue protein sequence, read N- to C-terminus: uncharacterized protein (672 aa).

An N-terminal signal peptide occupies residues 1–24 (MKTLKTLKIFIIICIASVSLASFA). The next 6 helical transmembrane spans lie at 226-246 (IIGAALILYTMFFAFNMALNK), 254-274 (IALFVIKFLLVAYFSIGLGPL), 410-430 (IILAAGLVFSVIFLSILLYFI), 436-456 (CMITIYVMTYISPIFIPMALF), 469-489 (VCISCALQPAVVAGFIALLIT), and 562-582 (VVSILAELLCVLVFSVIFYYF). A disordered region spans residues 626–672 (ASQGKPSVGDKPDVGGKRKEGEQQGGDSESGAGGGLADLASGSGGGK). Positions 633–647 (VGDKPDVGGKRKEGE) are enriched in basic and acidic residues. Gly residues predominate over residues 656–672 (GAGGGLADLASGSGGGK).

It belongs to the TrbL/VirB6 family.

It localises to the cell membrane. This is an uncharacterized protein from Rickettsia felis (strain ATCC VR-1525 / URRWXCal2) (Rickettsia azadi).